The chain runs to 293 residues: Sodium-type flagellar protein MotY (293 aa).

Positions 1 to 21 (MNKWLITSGVMLSLLSANSYA) are cleaved as a signal peptide. One can recognise an OmpA-like domain in the interval 175–292 (YSFEDIAFTI…RVVISLGRTQ (118 aa)).

The protein resides in the cell membrane. Functionally, may play the role of a stator in the sodium flagellar motor, stabilizing the force-generating unit through direct interaction with the cell wall. This chain is Sodium-type flagellar protein MotY, found in Vibrio parahaemolyticus serotype O3:K6 (strain RIMD 2210633).